The following is a 186-amino-acid chain: Chromophore lyase CpcS/CpeS 1 (186 aa).

This sequence belongs to the CpcS/CpeS biliprotein lyase family.

In terms of biological role, covalently attaches a chromophore to Cys residue(s) of phycobiliproteins. The protein is Chromophore lyase CpcS/CpeS 1 of Synechocystis sp. (strain ATCC 27184 / PCC 6803 / Kazusa).